The chain runs to 226 residues: Pre-mRNA-splicing factor SPF27 (226 aa).

Alanine 2 carries the post-translational modification N-acetylalanine. Serine 94 carries the phosphoserine modification. Residues tyrosine 139 to arginine 223 are a coiled coil.

This sequence belongs to the SPF27 family. Component of the pre-catalytic and catalytic spliceosome complexes. Component of the postcatalytic spliceosome P complex. Component of the PRP19-CDC5L splicing complex composed of a core complex comprising a homotetramer of PRPF19, CDC5L, PLRG1 and BCAS2, and at least three less stably associated proteins CTNNBL1, CWC15 and HSPA8. Interacts directly in the complex with PRPF19, CDC5L and PLRG1.

It localises to the nucleus. It is found in the nucleolus. In terms of biological role, required for pre-mRNA splicing as component of the activated spliceosome. Component of the PRP19-CDC5L complex that forms an integral part of the spliceosome and is required for activating pre-mRNA splicing. May have a scaffolding role in the spliceosome assembly as it contacts all other components of the core complex. The PRP19-CDC5L complex may also play a role in the response to DNA damage (DDR). This is Pre-mRNA-splicing factor SPF27 (BCAS2) from Pongo abelii (Sumatran orangutan).